Consider the following 68-residue polypeptide: MTNEEKLIAEIDSAGLSAEMLESMPSPEMFPLIIVNLQGRIAELEARETEMLARVDTLIARLAHLGVA.

Positions isoleucine 34–alanine 63 form a coiled coil.

Functionally, assembly protein. In Acinetobacter calcoaceticus (Arthrobacter siderocapsulatus), this protein is Protein P33 (XXXIII).